Here is a 185-residue protein sequence, read N- to C-terminus: Potassium-transporting ATPase KdpC subunit (185 aa).

The helical transmembrane segment at 14–34 (ALSLLTGVAYPLALTGIAAVI) threads the bilayer.

This sequence belongs to the KdpC family. In terms of assembly, the system is composed of three essential subunits: KdpA, KdpB and KdpC.

The protein resides in the cell inner membrane. Its function is as follows. Part of the high-affinity ATP-driven potassium transport (or Kdp) system, which catalyzes the hydrolysis of ATP coupled with the electrogenic transport of potassium into the cytoplasm. This subunit acts as a catalytic chaperone that increases the ATP-binding affinity of the ATP-hydrolyzing subunit KdpB by the formation of a transient KdpB/KdpC/ATP ternary complex. The chain is Potassium-transporting ATPase KdpC subunit from Cereibacter sphaeroides (strain KD131 / KCTC 12085) (Rhodobacter sphaeroides).